We begin with the raw amino-acid sequence, 559 residues long: Urocanate hydratase (559 aa).

NAD(+) contacts are provided by residues 54–55 (GG), glutamine 132, 178–180 (GMG), glutamate 198, arginine 203, 244–245 (NA), 265–269 (QTSAH), 275–276 (YL), and tyrosine 324. The active site involves cysteine 412. Glycine 494 is an NAD(+) binding site.

It belongs to the urocanase family. Requires NAD(+) as cofactor.

The protein localises to the cytoplasm. It carries out the reaction 4-imidazolone-5-propanoate = trans-urocanate + H2O. The protein operates within amino-acid degradation; L-histidine degradation into L-glutamate; N-formimidoyl-L-glutamate from L-histidine: step 2/3. In terms of biological role, catalyzes the conversion of urocanate to 4-imidazolone-5-propionate. This Azotobacter vinelandii (strain DJ / ATCC BAA-1303) protein is Urocanate hydratase.